The sequence spans 170 residues: Lipoprotein signal peptidase (170 aa).

Transmembrane regions (helical) follow at residues 12–32 (WYWVVVLVFLADQLSKQWVLS), 67–87 (WQRWLFTFVAVGFSVLLSVWL), and 94–113 (MWRLNLAYTLVIGGALGNLI). Residues Asp-123 and Asp-141 contribute to the active site. A helical membrane pass occupies residues 139-159 (IADSAICVGAGLIILDSFVAG).

The protein belongs to the peptidase A8 family.

It localises to the cell inner membrane. The enzyme catalyses Release of signal peptides from bacterial membrane prolipoproteins. Hydrolyzes -Xaa-Yaa-Zaa-|-(S,diacylglyceryl)Cys-, in which Xaa is hydrophobic (preferably Leu), and Yaa (Ala or Ser) and Zaa (Gly or Ala) have small, neutral side chains.. It functions in the pathway protein modification; lipoprotein biosynthesis (signal peptide cleavage). Its function is as follows. This protein specifically catalyzes the removal of signal peptides from prolipoproteins. In Shewanella pealeana (strain ATCC 700345 / ANG-SQ1), this protein is Lipoprotein signal peptidase.